The chain runs to 231 residues: 7-cyano-7-deazaguanine synthase (231 aa).

ATP is bound at residue 8-18 (FSGGQDSTTCL). C188, C197, C200, and C203 together coordinate Zn(2+).

Belongs to the QueC family. The cofactor is Zn(2+).

The catalysed reaction is 7-carboxy-7-deazaguanine + NH4(+) + ATP = 7-cyano-7-deazaguanine + ADP + phosphate + H2O + H(+). Its pathway is purine metabolism; 7-cyano-7-deazaguanine biosynthesis. Functionally, catalyzes the ATP-dependent conversion of 7-carboxy-7-deazaguanine (CDG) to 7-cyano-7-deazaguanine (preQ(0)). The sequence is that of 7-cyano-7-deazaguanine synthase from Salmonella agona (strain SL483).